Consider the following 671-residue polypeptide: Palmitoleoyl-protein carboxylesterase NOTUM (671 aa).

The first 46 residues, Met1–Ser46, serve as a signal peptide directing secretion. N-linked (GlcNAc...) asparagine glycosylation is present at Asn95. Catalysis depends on charge relay system residues Ser237 and Asp338. Residue Asn372 is glycosylated (N-linked (GlcNAc...) asparagine). His384 (charge relay system) is an active-site residue. The interval His411 to Pro592 is disordered. Residues Asn439–His454 are compositionally biased toward basic residues. Residues Leu470–Arg486 show a composition bias toward basic and acidic residues. A compositionally biased stretch (basic residues) spans Gln487–Gln497. A compositionally biased stretch (basic and acidic residues) spans Gln505–Ser514. Positions Pro570–Thr583 are enriched in polar residues. 2 N-linked (GlcNAc...) asparagine glycosylation sites follow: Asn578 and Asn612.

This sequence belongs to the pectinacetylesterase family. Notum subfamily.

It localises to the secreted. Its subcellular location is the cell surface. The catalysed reaction is [Wnt protein]-O-(9Z)-hexadecenoyl-L-serine + H2O = [Wnt protein]-L-serine + (9Z)-hexadecenoate + H(+). Its function is as follows. Carboxylesterase that acts as a key negative regulator of the Wnt signaling pathway by specifically mediating depalmitoleoylation of WNT proteins. Serine palmitoleoylation of WNT proteins is required for efficient binding to frizzled receptors. Also acts as a regulator of long-range activity of Hedgehog (hh), possibly by regulating the switch between low and high level hh pathway signaling. The chain is Palmitoleoyl-protein carboxylesterase NOTUM from Drosophila melanogaster (Fruit fly).